A 247-amino-acid chain; its full sequence is VQ motif-containing protein 4 (247 aa).

Residues 1–128 (MENSPRYREA…SSSSASGFRL (128 aa)) form a disordered region. A Phosphoserine modification is found at serine 16. Positions 21–37 (NSNNSCGMSSSSESNKP) are enriched in low complexity. 2 stretches are compositionally biased toward polar residues: residues 48–75 (RSES…QMLT) and 87–106 (LKPN…SSFS). The VQ signature appears at 67 to 76 (FKQVVQMLTG). A phosphoserine mark is found at serine 106, serine 155, serine 163, serine 165, and serine 175. The residue at position 178 (threonine 178) is a Phosphothreonine. Positions 184–247 (PFDRSGSSNQ…VSGSSSASTS (64 aa)) are disordered. Serine 194 carries the phosphoserine modification. Residues 200–210 (AEEKAMKERGF) are compositionally biased toward basic and acidic residues. Serine 215 bears the Phosphoserine mark. Phosphothreonine occurs at positions 219 and 234. Residues serine 235, serine 239, and serine 243 each carry the phosphoserine modification. Residues 236-247 (PRVSGSSSASTS) show a composition bias toward polar residues.

In terms of assembly, interacts with MPK3 and MPK6. Post-translationally, phosphorylated on serine and threonine residues by MPK6 following treatment with the pathogen-associated molecular pattern (PAMP) flg22. MAP kinase-mediated phosphorylation after PAMP elicitation causes degradation of VQ4, allowing WRKY33 to promote transcription from defense genes.

It localises to the nucleus. Its function is as follows. Acts as a negative regulator of WRKY33 transcription factor activity in the promotion of defense gene expression. Acts as a negative regulator of pathogen-associated molecular pattern (PAMP)-induced responses to modulate resistance to pathogens. The polypeptide is VQ motif-containing protein 4 (Arabidopsis thaliana (Mouse-ear cress)).